The following is a 205-amino-acid chain: Probable thymidylate kinase (205 aa).

7 to 14 (GIDGAGKS) serves as a coordination point for ATP.

Belongs to the thymidylate kinase family.

It catalyses the reaction dTMP + ATP = dTDP + ADP. This Thermococcus onnurineus (strain NA1) protein is Probable thymidylate kinase.